Consider the following 61-residue polypeptide: Tubulin alpha-4 chain (61 aa).

GTP is bound at residue Gln-11. Residues 35–61 form a disordered region; that stretch reads QMPGDKTIGGGDAEFDEGEDGDEGDEY. Position 40 is an N6-acetyllysine (Lys-40). A compositionally biased stretch (acidic residues) spans 47-61; the sequence is AEFDEGEDGDEGDEY.

It belongs to the tubulin family. In terms of assembly, dimer of alpha and beta chains. A typical microtubule is a hollow water-filled tube with an outer diameter of 25 nm and an inner diameter of 15 nM. Alpha-beta heterodimers associate head-to-tail to form protofilaments running lengthwise along the microtubule wall with the beta-tubulin subunit facing the microtubule plus end conferring a structural polarity. Microtubules usually have 13 protofilaments but different protofilament numbers can be found in some organisms and specialized cells. Mg(2+) serves as cofactor. Undergoes a tyrosination/detyrosination cycle, the cyclic removal and re-addition of a C-terminal tyrosine residue by the enzymes tubulin tyrosine carboxypeptidase (TTCP) and tubulin tyrosine ligase (TTL), respectively. Post-translationally, acetylation of alpha chains at Lys-40 stabilizes microtubules and affects affinity and processivity of microtubule motors. This modification has a role in multiple cellular functions, ranging from cell motility, cell cycle progression or cell differentiation to intracellular trafficking and signaling.

The protein localises to the cytoplasm. Its subcellular location is the cytoskeleton. The catalysed reaction is GTP + H2O = GDP + phosphate + H(+). Tubulin is the major constituent of microtubules, a cylinder consisting of laterally associated linear protofilaments composed of alpha- and beta-tubulin heterodimers. Microtubules grow by the addition of GTP-tubulin dimers to the microtubule end, where a stabilizing cap forms. Below the cap, tubulin dimers are in GDP-bound state, owing to GTPase activity of alpha-tubulin. The protein is Tubulin alpha-4 chain (TUBA4) of Zea mays (Maize).